A 542-amino-acid chain; its full sequence is Cytochrome P450 734A6 (542 aa).

A helical transmembrane segment spans residues 2–22 (GWWGWAAAAAAAAAWVAVKVL). Residue C474 coordinates heme.

Belongs to the cytochrome P450 family. It depends on heme as a cofactor. As to expression, highly expressed in leaf sheaths. Expressed in roots, shoot apex, leaf blades, internodes and panicles.

It is found in the membrane. Functionally, cytochrome P450 involved in brassinosteroids (BRs) inactivation and regulation of BRs homeostasis. Is a multifunctional and multisubstrate enzyme that controls the endogenous bioactive BR content both by direct inactivation of castasterone (CS) and by decreasing the levels of BR precursors. Catalyzes the oxidation of carbon 22 hydroxylated BR intermediates to produce C26 oxidized metabolites. The chain is Cytochrome P450 734A6 (CYP734A6) from Oryza sativa subsp. japonica (Rice).